The following is a 443-amino-acid chain: Exodeoxyribonuclease 7 large subunit (443 aa).

Belongs to the XseA family. As to quaternary structure, heterooligomer composed of large and small subunits.

It is found in the cytoplasm. The catalysed reaction is Exonucleolytic cleavage in either 5'- to 3'- or 3'- to 5'-direction to yield nucleoside 5'-phosphates.. Bidirectionally degrades single-stranded DNA into large acid-insoluble oligonucleotides, which are then degraded further into small acid-soluble oligonucleotides. In Legionella pneumophila (strain Paris), this protein is Exodeoxyribonuclease 7 large subunit.